The chain runs to 415 residues: Corticotropin-releasing factor receptor 1 (415 aa).

The N-terminal stretch at 1 to 23 (MGQRPQLRLVKALLLLGLNPVST) is a signal peptide. Residues 24–111 (SLQDQQCESL…CQEILNEEKK (88 aa)) are Extracellular-facing. Disulfide bonds link cysteine 30–cysteine 54, cysteine 44–cysteine 87, and cysteine 68–cysteine 102. N-linked (GlcNAc...) asparagine glycans are attached at residues asparagine 38, asparagine 45, asparagine 78, asparagine 90, and asparagine 98. Residues 99–108 (YSECQEILNE) are important for peptide agonist binding. The helical transmembrane segment at 112 to 142 (SKVHYHIAVIINYLGHCISLVALLVAFVLFL) threads the bilayer. At 143–149 (RLRSIRC) the chain is on the cytoplasmic side. The helical transmembrane segment at 150–174 (LRNIIHWNLISAFILRNATWFVVQL) threads the bilayer. The Extracellular segment spans residues 175–189 (TVSPEVHQSNVAWCR). A disulfide bridge connects residues cysteine 188 and cysteine 258. Residues 190–218 (LVTAAYNYFHVTNFFWMFGEGCYLHTAIV) traverse the membrane as a helical segment. At 219–225 (LTYSTDR) the chain is on the cytoplasmic side. The chain crosses the membrane as a helical span at residues 226 to 253 (LRKWMFVCIGWGVPFPIIVAWAIGKLYY). Topologically, residues 254–269 (DNEKCWFGKRPGVYTD) are extracellular. The chain crosses the membrane as a helical span at residues 270-295 (YIYQGPMILVLLINFIFLFNIVRILM). An important for antagonist binding region spans residues 280–290 (LLINFIFLFNI). The Cytoplasmic portion of the chain corresponds to 296-306 (TKLRASTTSET). Serine 301 is modified (phosphoserine; by PKA). The helical transmembrane segment at 307–331 (IQYRKAVKATLVLLPLLGITYMLFF) threads the bilayer. Topologically, residues 332-338 (VNPGEDE) are extracellular. Residues 339–368 (VSRVVFIYFNSFLESFQGFFVSVFYCFLNS) form a helical membrane-spanning segment. At 369–415 (EVRSAIRKRWRRWQDKHSIRARVARAMSIPTSPTRVSFHSIKQSTAV) the chain is on the cytoplasmic side.

Belongs to the G-protein coupled receptor 2 family. As to quaternary structure, heterodimer; heterodimerizes with GPER1. Interacts (via N-terminal extracellular domain) with CRH and UCN. Interacts with DLG1; this inhibits endocytosis of CRHR1 after agonist binding. In terms of processing, C-terminal Ser or Thr residues may be phosphorylated. Phosphorylation at Ser-301 by PKA prevents maximal coupling to Gq-protein, and thereby negatively regulates downstream signaling. Detected in brain cortex (at protein level).

It is found in the cell membrane. Its subcellular location is the endosome. In terms of biological role, G-protein coupled receptor for CRH (corticotropin-releasing factor) and UCN (urocortin). Has high affinity for CRH and UCN. Ligand binding causes a conformation change that triggers signaling via guanine nucleotide-binding proteins (G proteins) and down-stream effectors, such as adenylate cyclase. Promotes the activation of adenylate cyclase, leading to increased intracellular cAMP levels. Inhibits the activity of the calcium channel CACNA1H. Required for normal embryonic development of the adrenal gland and for normal hormonal responses to stress. Plays a role in the response to anxiogenic stimuli. This chain is Corticotropin-releasing factor receptor 1 (Crhr1), found in Mus musculus (Mouse).